Here is a 168-residue protein sequence, read N- to C-terminus: Endoribonuclease YbeY (168 aa).

The Zn(2+) site is built by His-126, His-130, and His-136.

Belongs to the endoribonuclease YbeY family. Requires Zn(2+) as cofactor.

It is found in the cytoplasm. Single strand-specific metallo-endoribonuclease involved in late-stage 70S ribosome quality control and in maturation of the 3' terminus of the 16S rRNA. The sequence is that of Endoribonuclease YbeY from Rhizobium meliloti (strain 1021) (Ensifer meliloti).